The chain runs to 94 residues: ATP synthase subunit c (94 aa).

Helical transmembrane passes span 15–35 and 58–78; these read IGVG…WGLI and FIFA…AMWF.

The protein belongs to the ATPase C chain family. As to quaternary structure, F-type ATPases have 2 components, F(1) - the catalytic core - and F(0) - the membrane proton channel. F(1) has five subunits: alpha(3), beta(3), gamma(1), delta(1), epsilon(1). F(0) has three main subunits: a(1), b(2) and c(10-14). The alpha and beta chains form an alternating ring which encloses part of the gamma chain. F(1) is attached to F(0) by a central stalk formed by the gamma and epsilon chains, while a peripheral stalk is formed by the delta and b chains.

The protein resides in the cell inner membrane. F(1)F(0) ATP synthase produces ATP from ADP in the presence of a proton or sodium gradient. F-type ATPases consist of two structural domains, F(1) containing the extramembraneous catalytic core and F(0) containing the membrane proton channel, linked together by a central stalk and a peripheral stalk. During catalysis, ATP synthesis in the catalytic domain of F(1) is coupled via a rotary mechanism of the central stalk subunits to proton translocation. In terms of biological role, key component of the F(0) channel; it plays a direct role in translocation across the membrane. A homomeric c-ring of between 10-14 subunits forms the central stalk rotor element with the F(1) delta and epsilon subunits. This Hydrogenovibrio crunogenus (strain DSM 25203 / XCL-2) (Thiomicrospira crunogena) protein is ATP synthase subunit c.